The following is a 212-amino-acid chain: Small ribosomal subunit protein uS5 (212 aa).

The region spanning 48–111 (LDDEVLDINM…EVAKLNIIDV (64 aa)) is the S5 DRBM domain.

This sequence belongs to the universal ribosomal protein uS5 family. Part of the 30S ribosomal subunit. Contacts protein S4.

Functionally, with S4 and S12 plays an important role in translational accuracy. The protein is Small ribosomal subunit protein uS5 of Halobacterium salinarum (strain ATCC 700922 / JCM 11081 / NRC-1) (Halobacterium halobium).